Here is a 347-residue protein sequence, read N- to C-terminus: uncharacterized protein (347 aa).

Residues 5–44 (CTICHNTPNRPVRLDCNHEFCYICIKGSIQNDMLNCAVCR) form an RING-type zinc finger. The region spanning 244–321 (NVQANFNVAR…NLDAWRQIKR (78 aa)) is the WWE domain.

This is an uncharacterized protein from Caenorhabditis elegans.